The following is a 339-amino-acid chain: Serpentine receptor class gamma-7 (339 aa).

A run of 7 helical transmembrane segments spans residues 30–50, 65–85, 98–118, 152–172, 200–220, 239–259, and 268–288; these read YWIQ…IIIT, WILT…LFVV, FSTI…IYNY, IPLF…NTVI, LHLT…LLLM, SIFI…YAFF, and FLVD…PLIF. The interval 319 to 339 is disordered; the sequence is PFNNTMPRQESPSPNYDSILA.

The protein belongs to the nematode receptor-like protein srg family.

The protein resides in the membrane. The sequence is that of Serpentine receptor class gamma-7 (srg-7) from Caenorhabditis elegans.